The chain runs to 144 residues: Superoxide dismutase [Mn], mitochondrial (144 aa).

Residues H10, H58, and D143 each coordinate Mn(2+).

This sequence belongs to the iron/manganese superoxide dismutase family. As to quaternary structure, homotetramer. Requires Mn(2+) as cofactor.

Its subcellular location is the mitochondrion matrix. The catalysed reaction is 2 superoxide + 2 H(+) = H2O2 + O2. Destroys superoxide anion radicals which are normally produced within the cells and which are toxic to biological systems. The sequence is that of Superoxide dismutase [Mn], mitochondrial from Petromyzon marinus (Sea lamprey).